A 246-amino-acid polypeptide reads, in one-letter code: 7-cyano-7-deazaguanine synthase (246 aa).

24-34 (FSGGLDSTTVL) contacts ATP. Residues cysteine 209, cysteine 219, cysteine 222, and cysteine 225 each contribute to the Zn(2+) site.

This sequence belongs to the QueC family. It depends on Zn(2+) as a cofactor.

It catalyses the reaction 7-carboxy-7-deazaguanine + NH4(+) + ATP = 7-cyano-7-deazaguanine + ADP + phosphate + H2O + H(+). It functions in the pathway purine metabolism; 7-cyano-7-deazaguanine biosynthesis. Catalyzes the ATP-dependent conversion of 7-carboxy-7-deazaguanine (CDG) to 7-cyano-7-deazaguanine (preQ(0)). The sequence is that of 7-cyano-7-deazaguanine synthase from Polynucleobacter asymbioticus (strain DSM 18221 / CIP 109841 / QLW-P1DMWA-1) (Polynucleobacter necessarius subsp. asymbioticus).